Reading from the N-terminus, the 397-residue chain is Enoyl-[acyl-carrier-protein] reductase [NADH] (397 aa).

NAD(+) contacts are provided by residues 48–53 (GASTGY), 74–75 (FE), 111–112 (DA), and 139–140 (VA). Residue Y225 participates in substrate binding. Y235 acts as the Proton donor in catalysis. Residues K244 and 273 to 275 (VVT) contribute to the NAD(+) site.

It belongs to the TER reductase family. As to quaternary structure, monomer.

It carries out the reaction a 2,3-saturated acyl-[ACP] + NAD(+) = a (2E)-enoyl-[ACP] + NADH + H(+). The protein operates within lipid metabolism; fatty acid biosynthesis. Involved in the final reduction of the elongation cycle of fatty acid synthesis (FAS II). Catalyzes the reduction of a carbon-carbon double bond in an enoyl moiety that is covalently linked to an acyl carrier protein (ACP). The chain is Enoyl-[acyl-carrier-protein] reductase [NADH] from Burkholderia pseudomallei (strain 668).